Consider the following 351-residue polypeptide: Dihydroorotate dehydrogenase (quinone) (351 aa).

Residues 61–65 (AGLDK) and threonine 85 each bind FMN. Lysine 65 lines the substrate pocket. Substrate is bound at residue 110–114 (NRMGF). Residues asparagine 139 and asparagine 172 each coordinate FMN. Asparagine 172 provides a ligand contact to substrate. Serine 175 (nucleophile) is an active-site residue. Asparagine 177 contacts substrate. Lysine 217 and threonine 245 together coordinate FMN. Substrate is bound at residue 246–247 (NT). FMN-binding positions include glycine 268, glycine 297, and 318–319 (YT).

This sequence belongs to the dihydroorotate dehydrogenase family. Type 2 subfamily. As to quaternary structure, monomer. It depends on FMN as a cofactor.

The protein resides in the cell membrane. The enzyme catalyses (S)-dihydroorotate + a quinone = orotate + a quinol. It participates in pyrimidine metabolism; UMP biosynthesis via de novo pathway; orotate from (S)-dihydroorotate (quinone route): step 1/1. Its function is as follows. Catalyzes the conversion of dihydroorotate to orotate with quinone as electron acceptor. The polypeptide is Dihydroorotate dehydrogenase (quinone) (Xylella fastidiosa (strain M12)).